We begin with the raw amino-acid sequence, 277 residues long: Sulfate transport system permease protein CysT (277 aa).

A run of 7 helical transmembrane segments spans residues 17 to 37 (LGTS…ALVM), 64 to 84 (LLAA…MAWI), 99 to 119 (LMDL…ASLF), 136 to 156 (VTYT…PFVV), 188 to 205 (VVLP…ALSF), 215 to 235 (VIFI…MIFV), and 243 to 263 (PAAS…LFSI). An ABC transmembrane type-1 domain is found at 60–263 (YKVTLLAAFV…AASLLLLFSI (204 aa)).

Belongs to the binding-protein-dependent transport system permease family. CysTW subfamily. In terms of assembly, the complex is composed of two ATP-binding proteins (CysA), two transmembrane proteins (CysT and CysW) and a solute-binding protein (CysP).

It is found in the cell inner membrane. Functionally, part of the ABC transporter complex CysAWTP (TC 3.A.1.6.1) involved in sulfate/thiosulfate import. Probably responsible for the translocation of the substrate across the membrane. The polypeptide is Sulfate transport system permease protein CysT (cysU) (Salmonella typhimurium (strain LT2 / SGSC1412 / ATCC 700720)).